A 483-amino-acid polypeptide reads, in one-letter code: Ero1-like protein (483 aa).

A signal peptide spans 1 to 29 (MTTRTVQRNLWASAAVVLVLLLLWTDTTG). Cystine bridges form between cysteine 44–cysteine 57, cysteine 46–cysteine 55, cysteine 94–cysteine 402, cysteine 103–cysteine 108, cysteine 227–cysteine 251, and cysteine 405–cysteine 408. 3 residues coordinate FAD: arginine 206, threonine 208, and tryptophan 219. N-linked (GlcNAc...) asparagine glycosylation occurs at asparagine 232. Residues serine 262, histidine 265, and arginine 301 each contribute to the FAD site. N-linked (GlcNAc...) asparagine glycosylation occurs at asparagine 395.

This sequence belongs to the EROs family. As to quaternary structure, may function both as a monomer and a homodimer. FAD serves as cofactor.

The protein resides in the endoplasmic reticulum membrane. In terms of biological role, oxidoreductase involved in disulfide bond formation in the endoplasmic reticulum. Efficiently reoxidizes pdi-1, the enzyme catalyzing protein disulfide formation, in order to allow pdi-1 to sustain additional rounds of disulfide formation. Following pdi reoxidation, passes its electrons to molecular oxygen via FAD, leading to the production of reactive oxygen species (ROS) in the cell. The polypeptide is Ero1-like protein (Ero1L) (Drosophila melanogaster (Fruit fly)).